The primary structure comprises 384 residues: N-acetyldiaminopimelate deacetylase (384 aa).

Aspartate 73 is an active-site residue. Catalysis depends on glutamate 132, which acts as the Proton acceptor.

It belongs to the peptidase M20A family. N-acetyldiaminopimelate deacetylase subfamily.

The catalysed reaction is N-acetyl-(2S,6S)-2,6-diaminopimelate + H2O = (2S,6S)-2,6-diaminopimelate + acetate. The protein operates within amino-acid biosynthesis; L-lysine biosynthesis via DAP pathway; LL-2,6-diaminopimelate from (S)-tetrahydrodipicolinate (acetylase route): step 3/3. Catalyzes the conversion of N-acetyl-diaminopimelate to diaminopimelate and acetate. This chain is N-acetyldiaminopimelate deacetylase, found in Limosilactobacillus fermentum (strain NBRC 3956 / LMG 18251) (Lactobacillus fermentum).